The chain runs to 296 residues: (3R)-3-[(carboxymethyl)amino]fatty acid oxygenase/decarboxylase (296 aa).

Residues Tyr66, Tyr71, and Gly98 each contribute to the (3R)-3-[(carboxymethyl)amino]butanoate site. Residues Tyr66, Tyr71, and Gly98 each coordinate (3R)-3-{[carboxy(hydroxy)methyl]amino}butanoate. Residues His102 and Asp104 each coordinate Fe(2+). Residues Tyr105 and Lys163 each coordinate (3R)-3-[(carboxymethyl)amino]butanoate. (3R)-3-{[carboxy(hydroxy)methyl]amino}butanoate is bound by residues Tyr105 and Lys163. His265 provides a ligand contact to Fe(2+). His269 is a 2-oxoglutarate binding site. Residue Arg280 participates in (3R)-3-[(carboxymethyl)amino]butanoate binding. Arg280 contacts (3R)-3-{[carboxy(hydroxy)methyl]amino}butanoate.

This sequence belongs to the TfdA dioxygenase family. Fe(2+) is required as a cofactor.

The enzyme catalyses a (3R)-3-[(carboxymethyl)amino]fatty acid + 2 2-oxoglutarate + 2 O2 = a (3R)-3-isocyanyl-fatty acid + 2 succinate + 3 CO2 + 2 H2O. The catalysed reaction is a (3R)-3-[(carboxymethyl)amino]fatty acid + 2-oxoglutarate + O2 = a (3R)-3-{[carboxy(hydroxy)methyl]amino}fatty acid + succinate + CO2. It catalyses the reaction a (3R)-3-{[carboxy(hydroxy)methyl]amino}fatty acid + 2-oxoglutarate + O2 = a (3R)-3-isocyanyl-fatty acid + succinate + 2 CO2 + 2 H2O. It carries out the reaction (3R)-3-[(carboxymethyl)amino]butanoate + 2 2-oxoglutarate + 2 O2 = (3R)-3-isocyanylbutanoate + 2 succinate + 3 CO2 + 2 H2O. The enzyme catalyses (3R)-3-[(carboxymethyl)amino]butanoate + 2-oxoglutarate + O2 = (3R)-3-{[carboxy(hydroxy)methyl]amino}butanoate + succinate + CO2. The catalysed reaction is (3R)-3-{[carboxy(hydroxy)methyl]amino}butanoate + 2-oxoglutarate + O2 = (3R)-3-isocyanylbutanoate + succinate + 2 CO2 + 2 H2O. Its function is as follows. Involved in the biosynthesis of a unique class of isonitrile lipopeptides (INLPs). Catalyzes the conversion of (3R)-3-[(carboxymethyl)amino]fatty acids such as (3R)-3-[(carboxymethyl)amino]butanoate (CABA) to (3R)-3-isocyanylbutanoate (INBA) through an oxidative decarboxylation mechanism, thereby generating the isonitrile group of INLPs. The chain is (3R)-3-[(carboxymethyl)amino]fatty acid oxygenase/decarboxylase from Streptomyces coeruleorubidus.